We begin with the raw amino-acid sequence, 490 residues long: DNA-binding protein D-ETS-3 (490 aa).

2 disordered regions span residues 190-255 (TASS…SGGG) and 271-294 (SSTQ…SQLR). Positions 196-207 (HVEHKVRADKST) are enriched in basic and acidic residues. The span at 211-227 (ATTSSHAAAPSSSSSAS) shows a compositional bias: low complexity. Over residues 244–255 (GTGGGASASGGG) the composition is skewed to gly residues. A compositionally biased stretch (low complexity) spans 271–280 (SSTQSQGYSS). Residues 317 to 397 (IQLWQFLLEL…HGKRYAYKFD (81 aa)) constitute a DNA-binding region (ETS).

The protein belongs to the ETS family. As to expression, embryonic ventral nervous system, higher in the thoracic than abdominal segments.

Its subcellular location is the nucleus. The protein is DNA-binding protein D-ETS-3 (Ets65A) of Drosophila melanogaster (Fruit fly).